Here is a 417-residue protein sequence, read N- to C-terminus: Mitochondrial inner membrane i-AAA protease supercomplex subunit MGR1 (417 aa).

Positions 1–28 are disordered; it reads MAVFTPPSGNSNSTDHTHTQDDHDKDDN. Over 1–56 the chain is Mitochondrial intermembrane; sequence MAVFTPPSGNSNSTDHTHTQDDHDKDDNDIKKFYIRPSLGLKLWGPLVPAPDNLPG. Residues 15-28 show a composition bias toward basic and acidic residues; the sequence is DHTHTQDDHDKDDN. Residues 57-73 traverse the membrane as a helical segment; that stretch reads LYTLITIQSAVGFFALW. Residues 74 to 151 are Mitochondrial matrix-facing; it reads RLRRLYKLPP…RQSRFVSVRK (78 aa). Residues 152–169 form a helical membrane-spanning segment; it reads LLWGLFGSLLLSQSLLEL. The Mitochondrial intermembrane segment spans residues 170 to 417; it reads TRLNFLKYDP…PKALTNEKTH (248 aa). Residues 391–401 are compositionally biased toward polar residues; sequence SHTKTPTSTDQ. Residues 391–417 are disordered; that stretch reads SHTKTPTSTDQPLPGPTPKALTNEKTH.

The protein belongs to the MGR1 family. In terms of assembly, component of the mitochondrial inner membrane i-AAA protease supercomplex composed of MGR1, MGR3 and YME1. With MGR3, forms a subcomplex that binds to YME1 and to substrates to facilitate proteolysis. Interacts directly with YME1.

Its subcellular location is the mitochondrion inner membrane. In terms of biological role, component of the mitochondrial inner membrane i-AAA protease supercomplex required for mitochondrial inner membrane protein turnover. Together with MGR3, functions in an adapter complex that targets substrates to the i-AAA protease for degradation. Required for growth of cells lacking the mitochondrial genome. The chain is Mitochondrial inner membrane i-AAA protease supercomplex subunit MGR1 (MGR1) from Saccharomyces cerevisiae (strain ATCC 204508 / S288c) (Baker's yeast).